The primary structure comprises 837 residues: Toll-like receptor 4 (837 aa).

A signal peptide spans 1–23 (MMSASRLAGTLIPAMAFLSCVRP). Residues 24-629 (ESWEPCVVPN…SLNITCQMNK (606 aa)) are Extracellular-facing. Cys29 and Cys38 are oxidised to a cystine. N-linked (GlcNAc...) asparagine glycosylation occurs at Asn33. 5 LRR repeats span residues 53-74 (STKN…SFFS), 77-98 (ELQV…AYQS), 101-122 (HLST…AFSG), 125-146 (SLQK…PIGH), and 149-170 (TLKE…EYFS). Asn171 carries N-linked (GlcNAc...) asparagine glycosylation. 3 LRR repeats span residues 174-197 (NLEY…RVLH), 203-223 (NLSL…AFKE), and 225-245 (RLHK…KTCI). Asn203 carries N-linked (GlcNAc...) asparagine glycosylation. The cysteines at positions 279 and 304 are disulfide-linked. N-linked (GlcNAc...) asparagine glycosylation is found at Asn280 and Asn307. 10 LRR repeats span residues 329-349 (GWQH…LKLK), 350-371 (SLKR…VDLP), 372-392 (SLEF…CSQS), 398-420 (SLKY…LGLE), 421-442 (QLEH…SVFL), 446-454 (NLIYLDISH), 470-493 (SLEV…FTEL), 495-516 (NLTF…AFNS), 519-540 (SLQV…PYKC), and 543-563 (SLRV…QELQ). Residues Cys388 and Cys389 are joined by a disulfide bond. N-linked (GlcNAc...) asparagine glycans are attached at residues Asn495 and Asn524. N-linked (GlcNAc...) asparagine glycosylation is present at Asn573. The LRRCT domain maps to 577 to 627 (NDFACTCEHQSFLQWIKDQRQLLVEVERMECATPSDKQGMPVLSLNITCQM). 2 disulfide bridges follow: Cys581–Cys607 and Cys583–Cys625. N-linked (GlcNAc...) asparagine glycosylation is found at Asn622 and Asn628. A helical transmembrane segment spans residues 630 to 650 (TIIGVSVLSVLVVSVVAVLVY). The Cytoplasmic portion of the chain corresponds to 651–837 (KFYFHLMLLA…GCNWQEATSI (187 aa)). Residues 670–813 (NVYDAFVIYS…IFWRRLRKAL (144 aa)) form the TIR domain.

It belongs to the Toll-like receptor family. Belongs to the lipopolysaccharide (LPS) receptor, a multi-protein complex containing at least CD14, LY96 and TLR4. Binding to bacterial LPS leads to homodimerization. Interacts with LY96 via the extracellular domain. Interacts with MYD88 and TIRAP via their respective TIR domains. Interacts with TICAM2. Interacts with NOX4. Interacts with CNPY3 and HSP90B1; this interaction is required for proper folding in the endoplasmic reticulum. Interacts with MAP3K21; this interaction leads to negative regulation of TLR4 signaling. Interacts with CD36, following CD36 stimulation by oxLDL or amyloid-beta 42, and forms a heterodimer with TLR6. The trimeric complex is internalized and triggers inflammatory response. LYN kinase activity facilitates TLR4-TLR6 heterodimerization and signal initiation. Interacts with TICAM1 in response to LPS in a WDFY1-dependent manner. Interacts with WDFY1 in response to LPS. Interacts with SMPDL3B. Interacts with CEACAM1; upon lipopolysaccharide stimulation, forms a complex including TLR4 and the phosphorylated form of SYK and CEACAM1, which in turn, recruits PTPN6 that dephosphorylates SYK, reducing the production of reactive oxygen species (ROS) and lysosome disruption, which in turn, reduces the activity of the inflammasome. Interacts with RFTN1; the interaction occurs in response to lipopolysaccharide stimulation. Interacts with SCIMP; the interaction occurs in response to lipopolysaccharide stimulation and is enhanced by phosphorylation of SCIMP by LYN. This interaction facilitates the phosphorylation of TLR4 by LYN which elicits a selective cytokine response in macrophages. Interacts with TRAF3IP3. Interacts with TREM1; this interaction enhances TLR4-mediated inflammatory response. Interacts with ZG16B/PAUF. Interacts with CD82; this interaction inhibits TLR4-mediated signaling pathway. Phosphorylated on tyrosine residues by LYN after binding lipopolysaccharide. Post-translationally, ubiquitinated by RNF128 via 'Lys-28'-linked polyubiquitin chains, leading to proteasomal degradation.

The protein resides in the cell membrane. It localises to the early endosome. Its subcellular location is the cell projection. It is found in the ruffle. Its function is as follows. Transmembrane receptor that functions as a pattern recognition receptor recognizing pathogen- and damage-associated molecular patterns (PAMPs and DAMPs) to induce innate immune responses via downstream signaling pathways. At the plasma membrane, cooperates with LY96 to mediate the innate immune response to bacterial lipopolysaccharide (LPS). Also involved in LPS-independent inflammatory responses triggered by free fatty acids, such as palmitate, and Ni(2+). Mechanistically, acts via MYD88, TIRAP and TRAF6, leading to NF-kappa-B activation, cytokine secretion and the inflammatory response. Alternatively, CD14-mediated TLR4 internalization via endocytosis is associated with the initiation of a MYD88-independent signaling via the TICAM1-TBK1-IRF3 axis leading to type I interferon production. In addition to the secretion of proinflammatory cytokines, initiates the activation of NLRP3 inflammasome and formation of a positive feedback loop between autophagy and NF-kappa-B signaling cascade. In complex with TLR6, promotes inflammation in monocytes/macrophages by associating with TLR6 and the receptor CD86. Upon ligand binding, such as oxLDL or amyloid-beta 42, the TLR4:TLR6 complex is internalized and triggers inflammatory response, leading to NF-kappa-B-dependent production of CXCL1, CXCL2 and CCL9 cytokines, via MYD88 signaling pathway, and CCL5 cytokine, via TICAM1 signaling pathway. In myeloid dendritic cells, vesicular stomatitis virus glycoprotein G but not LPS promotes the activation of IRF7, leading to type I IFN production in a CD14-dependent manner. In Gorilla gorilla gorilla (Western lowland gorilla), this protein is Toll-like receptor 4 (TLR4).